The sequence spans 250 residues: Ubiquinone biosynthesis O-methyltransferase (250 aa).

Residues arginine 41, glycine 72, aspartate 93, and methionine 136 each coordinate S-adenosyl-L-methionine.

This sequence belongs to the methyltransferase superfamily. UbiG/COQ3 family.

The catalysed reaction is a 3-demethylubiquinol + S-adenosyl-L-methionine = a ubiquinol + S-adenosyl-L-homocysteine + H(+). It catalyses the reaction a 3-(all-trans-polyprenyl)benzene-1,2-diol + S-adenosyl-L-methionine = a 2-methoxy-6-(all-trans-polyprenyl)phenol + S-adenosyl-L-homocysteine + H(+). The protein operates within cofactor biosynthesis; ubiquinone biosynthesis. Functionally, O-methyltransferase that catalyzes the 2 O-methylation steps in the ubiquinone biosynthetic pathway. The protein is Ubiquinone biosynthesis O-methyltransferase of Agrobacterium fabrum (strain C58 / ATCC 33970) (Agrobacterium tumefaciens (strain C58)).